Reading from the N-terminus, the 421-residue chain is Zinc metalloproteinase-disintegrin-like lachestatin-1 (421 aa).

The Peptidase M12B domain maps to 10–206 (KYVKLVLVAD…DMPQCILEKP (197 aa)). Intrachain disulfides connect Cys121–Cys201, Cys161–Cys185, and Cys163–Cys168. Residue His146 participates in Zn(2+) binding. Glu147 is a catalytic residue. Zn(2+) is bound by residues His150 and His156. In terms of domain architecture, Disintegrin spans 214–299 (PPVCGNYFVE…AECTDRFQRN (86 aa)). Residues Val216, Asn219, Phe221, Glu223, Glu226, and Asp229 each contribute to the Ca(2+) site. Disulfide bonds link Cys217–Cys246, Cys228–Cys241, Cys230–Cys236, Cys240–Cys263, Cys254–Cys260, Cys259–Cys285, Cys272–Cys292, Cys279–Cys310, Cys303–Cys315, Cys322–Cys372, Cys337–Cys383, Cys350–Cys360, Cys367–Cys409, and Cys403–Cys414. A D/ECD-tripeptide motif is present at residues 278–280 (ECD). Ca(2+) is bound by residues Asp280, Met281, Asp283, Asp294, and Arg295. Residue Asn312 is glycosylated (N-linked (GlcNAc...) asparagine).

It belongs to the venom metalloproteinase (M12B) family. P-III subfamily. P-IIIc sub-subfamily. Homodimer; disulfide-linked. Zn(2+) serves as cofactor. In terms of tissue distribution, expressed by the venom gland.

It is found in the secreted. Snake venom zinc metalloprotease that induces apoptosis in vascular endothelial cells (VEC), without degrading the extracellular matrix (it cannot cleave collagen) or inhibiting adhesion of VEC. Has also fibrinogenolytic and hemorrhagic activities. This is Zinc metalloproteinase-disintegrin-like lachestatin-1 from Lachesis muta rhombeata (Bushmaster).